A 191-amino-acid chain; its full sequence is Cdc42 homolog (191 aa).

10–17 (GDGAVGKT) lines the GTP pocket. An Effector region motif is present at residues 32 to 40 (YVPTVFDNY). GTP is bound by residues 57–61 (DTAGQ) and 115–118 (TQID). A Cysteine methyl ester modification is found at Cys188. Cys188 carries S-geranylgeranyl cysteine lipidation. The propeptide at 189-191 (KFL) is removed in mature form.

Belongs to the small GTPase superfamily. Rho family. CDC42 subfamily.

The protein resides in the cell junction. It is found in the adherens junction. Its subcellular location is the cell membrane. It carries out the reaction GTP + H2O = GDP + phosphate + H(+). Regulates mbt kinase activity and is also required to recruit mbt to adherens junctions. Together with mbt, regulates photoreceptor cell morphogenesis. In Drosophila pseudoobscura pseudoobscura (Fruit fly), this protein is Cdc42 homolog.